A 132-amino-acid polypeptide reads, in one-letter code: UPF0299 membrane protein YohJ (132 aa).

4 consecutive transmembrane segments (helical) span residues 7 to 27, 31 to 51, 63 to 83, and 93 to 113; these read IIWQ…AGIF, LLPV…VLLA, GCYV…VGVM, and FGPV…VMSW.

Belongs to the UPF0299 family.

It localises to the cell inner membrane. The protein is UPF0299 membrane protein YohJ of Shigella dysenteriae serotype 1 (strain Sd197).